The chain runs to 182 residues: uncharacterized protein (182 aa).

Residues 17–34 (LSLVLFAVLSVLPLGGCA) traverse the membrane as a helical segment. 2 TPR repeats span residues 89–122 (VDAAIRLTKALVAQKRPHEALQVLDNVLVVTPDN) and 123–156 (LRALNAKAVILDIEGRHDAAQELYRQALETNPEN).

The protein localises to the membrane. This is an uncharacterized protein from Sinorhizobium fredii (strain NBRC 101917 / NGR234).